The following is a 272-amino-acid chain: tRNA pseudouridine synthase A (272 aa).

Catalysis depends on Asp-52, which acts as the Nucleophile. Tyr-110 contributes to the substrate binding site.

This sequence belongs to the tRNA pseudouridine synthase TruA family. In terms of assembly, homodimer.

It carries out the reaction uridine(38/39/40) in tRNA = pseudouridine(38/39/40) in tRNA. Formation of pseudouridine at positions 38, 39 and 40 in the anticodon stem and loop of transfer RNAs. The sequence is that of tRNA pseudouridine synthase A from Cupriavidus necator (strain ATCC 17699 / DSM 428 / KCTC 22496 / NCIMB 10442 / H16 / Stanier 337) (Ralstonia eutropha).